The chain runs to 202 residues: Small ribosomal subunit protein uS2 (202 aa).

Belongs to the universal ribosomal protein uS2 family. As to quaternary structure, part of the 30S ribosomal subunit.

This is Small ribosomal subunit protein uS2 from Pyrococcus furiosus (strain ATCC 43587 / DSM 3638 / JCM 8422 / Vc1).